Consider the following 285-residue polypeptide: Nucleotide-binding protein PSPPH_4154 (285 aa).

8–15 (GRSGSGKS) provides a ligand contact to ATP. Residue 60–63 (DARN) participates in GTP binding.

It belongs to the RapZ-like family.

Functionally, displays ATPase and GTPase activities. The sequence is that of Nucleotide-binding protein PSPPH_4154 from Pseudomonas savastanoi pv. phaseolicola (strain 1448A / Race 6) (Pseudomonas syringae pv. phaseolicola (strain 1448A / Race 6)).